The following is a 462-amino-acid chain: Nuclear distribution protein PAC1 (462 aa).

A LisH domain is found at 9–41 (QAEELHKAIIAYLGVINAPKTAAAFREEVNFSA). A coiled-coil region spans residues 60–87 (TSVVRLQKKVLELEQRNQSLQSELDSTT). The span at 78-99 (SLQSELDSTTPTSLLRRNQDPS) shows a compositional bias: polar residues. The interval 78–103 (SLQSELDSTTPTSLLRRNQDPSSWLP) is disordered. WD repeat units follow at residues 113–154 (SHRS…RTVK), 156–196 (HTKG…KNIR), 200–247 (GHDH…CVKT), 250–289 (GHAD…AKCT), 292–352 (GHEH…IKTL), 354–393 (GHDN…RCVK), 398–445 (AHSH…AGIR), and 447–462 (VIAT…IFAS). The disordered stretch occupies residues 414-434 (KDAPTNGDAPNGTTANGASKK).

This sequence belongs to the WD repeat LIS1/nudF family. As to quaternary structure, self-associates. Interacts with NDL1 and dynein.

The protein localises to the cytoplasm. Its subcellular location is the cytoskeleton. It localises to the spindle pole. In terms of biological role, positively regulates the activity of the minus-end directed microtubule motor protein dynein. May enhance dynein-mediated microtubule sliding by targeting dynein to the microtubule plus end. Required for nuclear migration during vegetative growth as well as development. Required for retrograde early endosome (EE) transport from the hyphal tip. Required for localization of dynein to the mitotic spindle poles. Recruits additional proteins to the dynein complex at SPBs. The protein is Nuclear distribution protein PAC1 of Phaeosphaeria nodorum (strain SN15 / ATCC MYA-4574 / FGSC 10173) (Glume blotch fungus).